Consider the following 462-residue polypeptide: MYGKIEKIHFVGIGGIGMSGIAEVLLNLGYKVSGSDLKQSDTTDRLASLGGEIRFGHGRENVADVDVVVTSTAVRDDNPEVVEAKRRMIPVIPRAEMLAELMRMKYGIAIAGTHGKTTTTSMVATVLTHGGIDPTIVIGGKLNTLGTNAKLGQGQFLVAEADESDGSFLKLSPTIAVVTNIDADHLDFYTGGIEQIKDTFVDFINKIPFYGLAVLCLEDRNIAEILPRVKKRFVTYGLSSQADIRATHIRLEGGTTSFVAHYKGYRMGEVSFSMPGAHNVLNALACIAVAMELDVPFSQIQEGFATFGGVGRRFQVKGEVNGITVVDDYGHHPAEIRATLAAGKSGWPERRLVVAFQPHRFSRTRELFAEFVTCFYDADVLVLTDIYPAGEAPIEGVSAERLAEEIRKHGQRDVTYVADREALPEHLLTIVQPGDIVLTLGAGNIWQSGEAFLAKLEEARQA.

112 to 118 (GTHGKTT) contacts ATP.

This sequence belongs to the MurCDEF family.

It localises to the cytoplasm. It catalyses the reaction UDP-N-acetyl-alpha-D-muramate + L-alanine + ATP = UDP-N-acetyl-alpha-D-muramoyl-L-alanine + ADP + phosphate + H(+). It functions in the pathway cell wall biogenesis; peptidoglycan biosynthesis. In terms of biological role, cell wall formation. The polypeptide is UDP-N-acetylmuramate--L-alanine ligase (Geobacter sulfurreducens (strain ATCC 51573 / DSM 12127 / PCA)).